The following is a 179-amino-acid chain: Large ribosomal subunit protein uL5 (179 aa).

Belongs to the universal ribosomal protein uL5 family. Part of the 50S ribosomal subunit; part of the 5S rRNA/L5/L18/L25 subcomplex. Contacts the 5S rRNA and the P site tRNA. Forms a bridge to the 30S subunit in the 70S ribosome.

In terms of biological role, this is one of the proteins that bind and probably mediate the attachment of the 5S RNA into the large ribosomal subunit, where it forms part of the central protuberance. In the 70S ribosome it contacts protein S13 of the 30S subunit (bridge B1b), connecting the 2 subunits; this bridge is implicated in subunit movement. Contacts the P site tRNA; the 5S rRNA and some of its associated proteins might help stabilize positioning of ribosome-bound tRNAs. This chain is Large ribosomal subunit protein uL5, found in Bacillus mycoides (strain KBAB4) (Bacillus weihenstephanensis).